The following is a 185-amino-acid chain: Elongation factor P (185 aa).

Belongs to the elongation factor P family.

It is found in the cytoplasm. It participates in protein biosynthesis; polypeptide chain elongation. Functionally, involved in peptide bond synthesis. Stimulates efficient translation and peptide-bond synthesis on native or reconstituted 70S ribosomes in vitro. Probably functions indirectly by altering the affinity of the ribosome for aminoacyl-tRNA, thus increasing their reactivity as acceptors for peptidyl transferase. The polypeptide is Elongation factor P (Streptococcus uberis (strain ATCC BAA-854 / 0140J)).